A 496-amino-acid polypeptide reads, in one-letter code: 1-aminocyclopropane-1-carboxylate synthase 2 (496 aa).

Glu55 and Tyr93 together coordinate substrate. N6-(pyridoxal phosphate)lysine is present on Lys279. A phosphoserine mark is found at Ser483, Ser488, and Ser491.

This sequence belongs to the class-I pyridoxal-phosphate-dependent aminotransferase family. Homodimer and heterodimer. In vivo, the relevance of heterodimerization with other ACS enzymes is however unsure. Interacts with GRF3. Requires pyridoxal 5'-phosphate as cofactor. In terms of processing, phosphorylated on serine residue by MAP kinase (MPK6). Post-translationally, may be processed at its C-terminus. High in developing leaves and in flowers. Expressed in roots and siliques.

It carries out the reaction S-adenosyl-L-methionine = 1-aminocyclopropane-1-carboxylate + S-methyl-5'-thioadenosine + H(+). It participates in alkene biosynthesis; ethylene biosynthesis via S-adenosyl-L-methionine; ethylene from S-adenosyl-L-methionine: step 1/2. Its function is as follows. 1-aminocyclopropane-1-carboxylate synthase (ACS) enzymes catalyze the conversion of S-adenosyl-L-methionine (SAM) into 1-aminocyclopropane-1-carboxylate (ACC), a direct precursor of ethylene. This chain is 1-aminocyclopropane-1-carboxylate synthase 2 (ACS2), found in Arabidopsis thaliana (Mouse-ear cress).